Consider the following 308-residue polypeptide: Elongation factor Ts (308 aa).

The segment at 80–83 (TDFV) is involved in Mg(2+) ion dislocation from EF-Tu.

The protein belongs to the EF-Ts family.

It localises to the cytoplasm. In terms of biological role, associates with the EF-Tu.GDP complex and induces the exchange of GDP to GTP. It remains bound to the aminoacyl-tRNA.EF-Tu.GTP complex up to the GTP hydrolysis stage on the ribosome. In Parvibaculum lavamentivorans (strain DS-1 / DSM 13023 / NCIMB 13966), this protein is Elongation factor Ts.